A 365-amino-acid chain; its full sequence is 3-dehydroquinate synthase (365 aa).

Residues 75–80 (DAENGK), 109–113 (GAATD), 133–134 (TT), Lys146, and Lys155 contribute to the NAD(+) site. Zn(2+)-binding residues include Glu188, His253, and His269.

Belongs to the sugar phosphate cyclases superfamily. Dehydroquinate synthase family. Co(2+) serves as cofactor. It depends on Zn(2+) as a cofactor. Requires NAD(+) as cofactor.

The protein localises to the cytoplasm. The catalysed reaction is 7-phospho-2-dehydro-3-deoxy-D-arabino-heptonate = 3-dehydroquinate + phosphate. The protein operates within metabolic intermediate biosynthesis; chorismate biosynthesis; chorismate from D-erythrose 4-phosphate and phosphoenolpyruvate: step 2/7. Its function is as follows. Catalyzes the conversion of 3-deoxy-D-arabino-heptulosonate 7-phosphate (DAHP) to dehydroquinate (DHQ). The sequence is that of 3-dehydroquinate synthase from Corynebacterium glutamicum (strain R).